The primary structure comprises 556 residues: Sphingomyelinase C (556 aa).

The signal sequence occupies residues 1–27 (MRIKKYTKVRLLVNCCLLLFFLIDCGA).

The protein localises to the secreted. It catalyses the reaction a sphingomyelin + H2O = phosphocholine + an N-acylsphing-4-enine + H(+). This is Sphingomyelinase C (sph) from Leptospira interrogans.